Reading from the N-terminus, the 70-residue chain is Cytochrome c oxidase subunit 8B, mitochondrial (70 aa).

The N-terminal 24 residues, 1–24, are a transit peptide targeting the mitochondrion; the sequence is MPRLPPILRLLQAPEKYTVIPKAR. The Mitochondrial matrix portion of the chain corresponds to 25-35; it reads ISSKPAKSPTS. The helical transmembrane segment at 36-59 threads the bilayer; the sequence is AMDQAVGMSVIIAGFMVPAGWVLS. Topologically, residues 60–70 are mitochondrial intermembrane; it reads HLESYKRSSAA.

Belongs to the cytochrome c oxidase VIII family. Component of the cytochrome c oxidase (complex IV, CIV), a multisubunit enzyme composed of 14 subunits. The complex is composed of a catalytic core of 3 subunits MT-CO1, MT-CO2 and MT-CO3, encoded in the mitochondrial DNA, and 11 supernumerary subunits COX4I, COX5A, COX5B, COX6A, COX6B, COX6C, COX7A, COX7B, COX7C, COX8 and NDUFA4, which are encoded in the nuclear genome. The complex exists as a monomer or a dimer and forms supercomplexes (SCs) in the inner mitochondrial membrane with NADH-ubiquinone oxidoreductase (complex I, CI) and ubiquinol-cytochrome c oxidoreductase (cytochrome b-c1 complex, complex III, CIII), resulting in different assemblies (supercomplex SCI(1)III(2)IV(1) and megacomplex MCI(2)III(2)IV(2)).

The protein localises to the mitochondrion inner membrane. It functions in the pathway energy metabolism; oxidative phosphorylation. Component of the cytochrome c oxidase, the last enzyme in the mitochondrial electron transport chain which drives oxidative phosphorylation. The respiratory chain contains 3 multisubunit complexes succinate dehydrogenase (complex II, CII), ubiquinol-cytochrome c oxidoreductase (cytochrome b-c1 complex, complex III, CIII) and cytochrome c oxidase (complex IV, CIV), that cooperate to transfer electrons derived from NADH and succinate to molecular oxygen, creating an electrochemical gradient over the inner membrane that drives transmembrane transport and the ATP synthase. Cytochrome c oxidase is the component of the respiratory chain that catalyzes the reduction of oxygen to water. Electrons originating from reduced cytochrome c in the intermembrane space (IMS) are transferred via the dinuclear copper A center (CU(A)) of subunit 2 and heme A of subunit 1 to the active site in subunit 1, a binuclear center (BNC) formed by heme A3 and copper B (CU(B)). The BNC reduces molecular oxygen to 2 water molecules using 4 electrons from cytochrome c in the IMS and 4 protons from the mitochondrial matrix. This chain is Cytochrome c oxidase subunit 8B, mitochondrial (Cox8b), found in Rattus norvegicus (Rat).